We begin with the raw amino-acid sequence, 432 residues long: MDHSMSKKLHDEALLHIVGGVNSPSRSNKGVGGGIPVTMERANGAYFYDVDGNKYIDYLAAFGPIITGHAHPHITEAITKAAQNGVLYGTPTKHEITFAKMLKEAIPSLEKVRFTNSGTEAVMTTIRVARAYTGRDKIIKFAGCYHGHFDLVLVEAGSGPSTLGIPDSAGVTRSTAEEVITVPFNDLTSFKEALAVWGDQVAAVLVEPIVGNFGMVAPAEGFLEAVNELAHENGSLVIYDEVITAFRFMYGGAQNYLGVIPDLTAMGKIIGGGLPIGAYGGRVDIMEKVAPLGPAYQAGTHAGNPASILSGIACLEVLQEEGLYDRFEKYGSMLKEGIEKAAIKHGIAVTVNQIVGALTVYFTDEPVTNYAEAGATNGDLFGRFFKGMLEEGINLAPSKYEAWFITSAHSEADILETIQAVDTVFGKLVQGK.

Position 268 is an N6-(pyridoxal phosphate)lysine (Lys268).

It belongs to the class-III pyridoxal-phosphate-dependent aminotransferase family. HemL subfamily. As to quaternary structure, homodimer. It depends on pyridoxal 5'-phosphate as a cofactor.

Its subcellular location is the cytoplasm. It catalyses the reaction (S)-4-amino-5-oxopentanoate = 5-aminolevulinate. It participates in porphyrin-containing compound metabolism; protoporphyrin-IX biosynthesis; 5-aminolevulinate from L-glutamyl-tRNA(Glu): step 2/2. This Listeria innocua serovar 6a (strain ATCC BAA-680 / CLIP 11262) protein is Glutamate-1-semialdehyde 2,1-aminomutase 2.